Here is a 384-residue protein sequence, read N- to C-terminus: S-adenosylmethionine synthase (384 aa).

Histidine 15 is an ATP binding site. Aspartate 17 is a binding site for Mg(2+). Glutamate 43 contributes to the K(+) binding site. Positions 56 and 99 each coordinate L-methionine. The flexible loop stretch occupies residues 99–109 (QSPDINQGVDR). ATP-binding positions include 164–166 (DAK), 230–231 (RF), aspartate 239, 245–246 (RK), alanine 262, and lysine 266. L-methionine is bound at residue aspartate 239. L-methionine is bound at residue lysine 270.

This sequence belongs to the AdoMet synthase family. Homotetramer; dimer of dimers. Mg(2+) serves as cofactor. The cofactor is K(+).

The protein resides in the cytoplasm. It carries out the reaction L-methionine + ATP + H2O = S-adenosyl-L-methionine + phosphate + diphosphate. It functions in the pathway amino-acid biosynthesis; S-adenosyl-L-methionine biosynthesis; S-adenosyl-L-methionine from L-methionine: step 1/1. Catalyzes the formation of S-adenosylmethionine (AdoMet) from methionine and ATP. The overall synthetic reaction is composed of two sequential steps, AdoMet formation and the subsequent tripolyphosphate hydrolysis which occurs prior to release of AdoMet from the enzyme. This Escherichia coli (strain K12 / DH10B) protein is S-adenosylmethionine synthase.